The sequence spans 220 residues: Small ribosomal subunit protein uS3c (220 aa).

In terms of domain architecture, KH type-2 spans 48–119; that stretch reads VQKHTNNPFH…KLCLILIKID (72 aa).

This sequence belongs to the universal ribosomal protein uS3 family. As to quaternary structure, part of the 30S ribosomal subunit.

It is found in the plastid. The protein resides in the chloroplast. This chain is Small ribosomal subunit protein uS3c (rps3), found in Psilotum nudum (Whisk fern).